A 441-amino-acid chain; its full sequence is Putative collagenous domain-containing protein R238 (441 aa).

The Collagen-like domain maps to 164–199 (GCKGEKGIKGELGPKGNTGQKGDIGSKGDRGDKGEP). Positions 171-198 (IKGELGPKGNTGQKGDIGSKGDRGDKGE) are disordered. A compositionally biased stretch (basic and acidic residues) spans 187–198 (IGSKGDRGDKGE).

The chain is Putative collagenous domain-containing protein R238 from Acanthamoeba polyphaga (Amoeba).